The primary structure comprises 130 residues: MSATQNYGTGRRKTATARVFLRPGTGNISINNRSLDTFFGRETARMVVRQPLELTETVEKFDIYVTVIGGGVSGQAGAIRHGITRALMDYDETLRSALRKAGFVTRDAREVERKKVGLRKARKRPQYSKR.

The protein belongs to the universal ribosomal protein uS9 family.

The polypeptide is Small ribosomal subunit protein uS9 (Pseudomonas fluorescens (strain Pf0-1)).